The chain runs to 899 residues: Protein suppressor of hairy wing (899 aa).

Disordered regions lie at residues 1 to 33 (MSAQ…RTGT), 45 to 127 (AAVA…KKMD), and 171 to 206 (AKEN…AKRR). Residues 21 to 31 (SDGDKPKEKRT) show a composition bias toward basic and acidic residues. Residues 45–55 (AAVASKGASVS) show a composition bias toward low complexity. Polar residues-rich tracts occupy residues 67–83 (KILN…STKG) and 102–111 (RSSAPASSAV). The span at 183–198 (VDEDDDDDDDDEDEGV) shows a compositional bias: acidic residues. The C2H2-type 1; atypical zinc-finger motif lies at 218 to 240 (HVCGKCYKTFRRVKSLKKHLEFC). The segment at 288–311 (INCPDCPKSFKTQTSYERHIFITH) adopts a C2H2-type 2 zinc-finger fold. A C2H2-type 3; atypical zinc finger spans residues 318–340 (YPCSICNAKLRSGALLKLHEQQH). C2H2-type zinc fingers lie at residues 347-365 (FACK…LKCH), 379-401 (MSCK…LKQH), 412-434 (YMCH…IRTH), 440-462 (FDCD…RRYH), 468-490 (YTCT…MKRH), 496-518 (HKCN…SKTH), 522-544 (YACS…VKDH), 552-576 (FACT…AGDH), and 594-617 (TDCA…RSVH). Disordered stretches follow at residues 646 to 665 (EQKE…GSLI), 702 to 734 (PLEG…VVKK), and 865 to 899 (GDED…ESEA). The span at 874–899 (ETDKGKDREADNTDTDTREDAVESEA) shows a compositional bias: basic and acidic residues.

The protein resides in the nucleus. Its function is as follows. Component of the gypsy chromatin insulator complex which is required for the function of the gypsy chromatin insulator and other endogenous chromatin insulators. Chromatin insulators are regulatory elements which establish independent domains of transcriptional activity within eukaryotic genomes. Insulators have two defining properties; they can block the communication between an enhancer and a promoter when placed between them and can also buffer transgenes from position effect variegation (PEV). Insulators are proposed to structure the chromatin fiber into independent domains of differing transcriptional potential by promoting the formation of distinct chromatin loops. This chromatin looping may involve the formation of insulator bodies, where homotypic interactions between individual subunits of the insulator complex could promote the clustering of widely spaced insulators at the nuclear periphery. Within the gypsy insulator complex, this protein binds specifically to a region of the gypsy element located 3' of the 5' long terminal repeat (LTR), and may also mediate interaction with other endogenous insulators at sites distinct from those recognized by Cp190. Cooperates with pita and cliff to recruit Cp190 and regulate insulator function at the front-ultraabdominal (Fub) boundary. The chain is Protein suppressor of hairy wing (su(Hw)) from Drosophila virilis (Fruit fly).